The following is a 1128-amino-acid chain: Nck-associated protein 1 (1128 aa).

The interval alanine 640–methionine 665 is disordered. A compositionally biased stretch (basic and acidic residues) spans lysine 651–methionine 665. A helical transmembrane segment spans residues isoleucine 995–methionine 1015.

The protein belongs to the HEM-1/HEM-2 family.

It localises to the cell membrane. The protein resides in the cell projection. The protein localises to the lamellipodium membrane. Its function is as follows. Part of the WAVE complex that regulates lamellipodia formation. The WAVE complex regulates actin filament reorganization via its interaction with the Arp2/3 complex. Actin remodeling activity is regulated by RAC1. Plays a role in neural tube closure. In Xenopus laevis (African clawed frog), this protein is Nck-associated protein 1 (nckap1).